Consider the following 311-residue polypeptide: Sulfate adenylyltransferase subunit 2 (311 aa).

The protein belongs to the PAPS reductase family. CysD subfamily. In terms of assembly, heterodimer composed of CysD, the smaller subunit, and CysN.

It catalyses the reaction sulfate + ATP + H(+) = adenosine 5'-phosphosulfate + diphosphate. The protein operates within sulfur metabolism; hydrogen sulfide biosynthesis; sulfite from sulfate: step 1/3. With CysN forms the ATP sulfurylase (ATPS) that catalyzes the adenylation of sulfate producing adenosine 5'-phosphosulfate (APS) and diphosphate, the first enzymatic step in sulfur assimilation pathway. APS synthesis involves the formation of a high-energy phosphoric-sulfuric acid anhydride bond driven by GTP hydrolysis by CysN coupled to ATP hydrolysis by CysD. In Caulobacter vibrioides (strain ATCC 19089 / CIP 103742 / CB 15) (Caulobacter crescentus), this protein is Sulfate adenylyltransferase subunit 2.